Here is a 397-residue protein sequence, read N- to C-terminus: MEKKSLYDISCKGSRVLMRVDFNVPLDEHAHITNDKRIIEALPSIHKIIEDGGRLILMSHLGRPKGKVVPELSLEPVAKRLSELLDTSVVMAGDCIGTEAMQQALALQDGEIMLLENLRFHPEEEKNDPEFARELASMGEIYVNDAFGTAHRAHASTEGICHYVQPSVAGFLIEKELKYLGQALNNPERPFVAILGGAKISGKIDVLENLFNKVDTVLIGGAMIFTFFKAQGLSVGKSLVEDDKVELARHLLQTAKERKINMLLPEDVIAASEFSGDAETMAVPVGGIPENMMGLDIGPKTIDTFSREILAAKTVVWNGPMGVFEIEPFAKGTIAIAQALADATAKGTISIVGGGDSAAAVMKAGLASGITHISTGGGASLEFLEGKELPGITALND.

Residues Asp21–Asn23, Arg37, His60–Arg63, Arg119, and Arg152 each bind substrate. ATP is bound by residues Lys203, Gly294, Glu325, and Gly354–Ser357.

The protein belongs to the phosphoglycerate kinase family. As to quaternary structure, monomer.

It localises to the cytoplasm. It catalyses the reaction (2R)-3-phosphoglycerate + ATP = (2R)-3-phospho-glyceroyl phosphate + ADP. It functions in the pathway carbohydrate degradation; glycolysis; pyruvate from D-glyceraldehyde 3-phosphate: step 2/5. This Chlorobium phaeobacteroides (strain BS1) protein is Phosphoglycerate kinase.